The sequence spans 819 residues: Myosin light chain kinase 3 (819 aa).

Residues 146–460 (VPWRRGSPGD…PGVGNPEPEQ (315 aa)) are disordered. Ser-152 bears the Phosphoserine mark. Composition is skewed to basic and acidic residues over residues 158-170 (EENKERVEEEGAK) and 183-196 (DAREPGEESQKADV). The segment covering 307-318 (GPGPQCPGPPGL) has biased composition (pro residues). Phosphoserine occurs at positions 355, 401, and 408. The region spanning 515–770 (VCQHEVLGGG…ATQCLKHEWL (256 aa)) is the Protein kinase domain. Residues 521–529 (LGGGRFGQV) and Lys-544 each bind ATP. The Proton acceptor role is filled by Asp-636.

Belongs to the protein kinase superfamily. CAMK Ser/Thr protein kinase family. Mg(2+) is required as a cofactor. Post-translationally, phosphorylated on serine residues.

It is found in the cytoplasm. It catalyses the reaction L-seryl-[myosin light chain] + ATP = O-phospho-L-seryl-[myosin light chain] + ADP + H(+). It carries out the reaction L-threonyl-[myosin light chain] + ATP = O-phospho-L-threonyl-[myosin light chain] + ADP + H(+). Its function is as follows. Kinase that phosphorylates MYL2 in vitro. Promotes sarcomere formation in cardiomyocytes and increases cardiomyocyte contractility. This is Myosin light chain kinase 3 (MYLK3) from Pongo abelii (Sumatran orangutan).